A 768-amino-acid chain; its full sequence is Gephyrin (768 aa).

The tract at residues 14–166 (QIRVGVLTVS…LPGSKKGSQE (153 aa)) is MPT Mo-transferase. The tract at residues 153 to 348 (LIINLPGSKK…VDITKVARRH (196 aa)) is interaction with GABARAP. Disordered regions lie at residues 194-245 (DELE…DSSS) and 273-316 (TASL…ASRV). Residues 200 to 212 (PSPPPPLSPPPTT) show a composition bias toward pro residues. Phosphoserine is present on residues serine 201 and serine 207. A Phosphothreonine modification is found at threonine 211. The residue at position 213 (serine 213) is a Phosphoserine. Cysteine 225 carries S-palmitoyl cysteine lipidation. Residues 274–299 (ASLSTTPSESPRAQATSRLSTASCPT) show a composition bias toward polar residues. Serine 275 is subject to Phosphoserine. Residues threonine 278 and threonine 279 each carry the phosphothreonine modification. Phosphoserine occurs at positions 281 and 283. Cysteine 297 is lipidated: S-palmitoyl cysteine. Residues 326–768 (SSKENILRAS…VVDVMVIGRL (443 aa)) form an MPT adenylyltransferase region. Serine 337 is modified (phosphoserine).

The protein in the N-terminal section; belongs to the MoaB/Mog family. It in the C-terminal section; belongs to the MoeA family. As to quaternary structure, homotrimer, homodimer and homooligomer. Interacts with SRGAP2 (via SH3 domain). Interacts with GLRB. Interacts with GABARAP. Interacts with GABRA3. GABRA3 and GLRB occupy overlapping binding sites. Interacts with ARHGAP32; IQSEC3, INSYN1 and INSYN2A. Requires Mg(2+) as cofactor. Phosphorylated. In terms of processing, palmitoylated. Palmitoylation is stimulated by GABA type A receptors activity. Palmitoylation by ZDHHC12 regulates clustering at synapses. In terms of tissue distribution, expressed in tissues including spinal cord, brain, liver, kidney and lung.

It is found in the postsynaptic cell membrane. The protein localises to the cell membrane. Its subcellular location is the cytoplasm. The protein resides in the cytosol. It localises to the cytoskeleton. It is found in the cell projection. The protein localises to the dendrite. Its subcellular location is the postsynaptic density. The catalysed reaction is molybdopterin + ATP + H(+) = adenylyl-molybdopterin + diphosphate. It carries out the reaction adenylyl-molybdopterin + molybdate = Mo-molybdopterin + AMP + H(+). It functions in the pathway cofactor biosynthesis; molybdopterin biosynthesis. Inhibited by copper and tungsten. Microtubule-associated protein involved in membrane protein-cytoskeleton interactions. It is thought to anchor the inhibitory glycine receptor (GLYR) to subsynaptic microtubules. Acts as a major instructive molecule at inhibitory synapses, where it also clusters GABA type A receptors. Functionally, also has a catalytic activity and catalyzes two steps in the biosynthesis of the molybdenum cofactor. In the first step, molybdopterin is adenylated. Subsequently, molybdate is inserted into adenylated molybdopterin and AMP is released. The chain is Gephyrin (Gphn) from Rattus norvegicus (Rat).